A 761-amino-acid chain; its full sequence is MSQTPLVTEAEITAEGLKPQEYTEIVRRLGRHPNRAELGMFGVMWSEHCCYKNSRLLLKQFPTQGPRVLVGPGENAGVVDLGDGLRLAFKIESHNHPSAIEPFQGAATGVGGILRDIFTMGARPIALLNALRFGDLKEAKTQQLVKGVVAGIAHYGNCVGVPTVGGEVYFDPCYAGNPLVNAMALGLMETPEIVKSAASGIGNPVLYVGSTTGRDGMGGASFASAELTDESMSDRPAVQVGDPFVEKCLIEACLEAFQTGAVVAAQDMGAAGLTCSTSEMAAKGGVGIELDLDKVPVREQGMVPYEFLLSESQERMLFVAAQGREAELIEIFQRWGLQAVVVGRVIAEPLVRVLYRGEVAAEVPARALAEETPLYERECPKEPPAYVQQARQWSVDQLPLPARSPAEILLTLLATPSIASKAWVYRQYDHEVQNNTLVFPGDGDAAVIRLRGTAKGIAATVDCPSRYVYLDPYEGGKAAVAEAARNLSCVGAEPLAVTDNLNFGSPETPVGYWQLANACRGLAEACRALQTPVTGGNVSLYNETIDSNGQPQPIYPTPVVGMVGLIADLQRVVGQGWRATGDAIYLLGLPLTTPLSDPRLSLGGSEYLAQIHGLVAGCPPQIDLDLEQRVQAVCRYGIQQGWIASAHDLSEGGLAVALAESCLSGQRGATIQLPEGTYPRWDALLFAEGGARILVSVPPREQVAWEAYAQAQLPNAWTRLGVVNGEDTELCIDSCNNSPLIRVTIKELDLAWRSPLPKYLD.

His-48 is a catalytic residue. Residues Tyr-51 and Lys-90 each contribute to the ATP site. Residue Glu-92 coordinates Mg(2+). Residues Ser-93–His-96 and Arg-115 contribute to the substrate site. His-94 functions as the Proton acceptor in the catalytic mechanism. Asp-116 is a binding site for Mg(2+). Residue Gln-239 participates in substrate binding. Residue Asp-267 participates in Mg(2+) binding. Glu-311–Gln-313 serves as a coordination point for substrate. The ATP site is built by Asp-499 and Gly-536. Asn-537 is a binding site for Mg(2+). Ser-539 contributes to the substrate binding site.

Belongs to the FGAMS family. In terms of assembly, monomer. Part of the FGAM synthase complex composed of 1 PurL, 1 PurQ and 2 PurS subunits.

The protein localises to the cytoplasm. It carries out the reaction N(2)-formyl-N(1)-(5-phospho-beta-D-ribosyl)glycinamide + L-glutamine + ATP + H2O = 2-formamido-N(1)-(5-O-phospho-beta-D-ribosyl)acetamidine + L-glutamate + ADP + phosphate + H(+). It functions in the pathway purine metabolism; IMP biosynthesis via de novo pathway; 5-amino-1-(5-phospho-D-ribosyl)imidazole from N(2)-formyl-N(1)-(5-phospho-D-ribosyl)glycinamide: step 1/2. Its function is as follows. Part of the phosphoribosylformylglycinamidine synthase complex involved in the purines biosynthetic pathway. Catalyzes the ATP-dependent conversion of formylglycinamide ribonucleotide (FGAR) and glutamine to yield formylglycinamidine ribonucleotide (FGAM) and glutamate. The FGAM synthase complex is composed of three subunits. PurQ produces an ammonia molecule by converting glutamine to glutamate. PurL transfers the ammonia molecule to FGAR to form FGAM in an ATP-dependent manner. PurS interacts with PurQ and PurL and is thought to assist in the transfer of the ammonia molecule from PurQ to PurL. The protein is Phosphoribosylformylglycinamidine synthase subunit PurL of Thermosynechococcus vestitus (strain NIES-2133 / IAM M-273 / BP-1).